Reading from the N-terminus, the 284-residue chain is 2-dehydro-3-deoxyphosphooctonate aldolase (284 aa).

The protein belongs to the KdsA family.

It is found in the cytoplasm. It catalyses the reaction D-arabinose 5-phosphate + phosphoenolpyruvate + H2O = 3-deoxy-alpha-D-manno-2-octulosonate-8-phosphate + phosphate. Its pathway is carbohydrate biosynthesis; 3-deoxy-D-manno-octulosonate biosynthesis; 3-deoxy-D-manno-octulosonate from D-ribulose 5-phosphate: step 2/3. It participates in bacterial outer membrane biogenesis; lipopolysaccharide biosynthesis. The protein is 2-dehydro-3-deoxyphosphooctonate aldolase of Aliivibrio fischeri (strain ATCC 700601 / ES114) (Vibrio fischeri).